Here is an 886-residue protein sequence, read N- to C-terminus: METRSKLMLLACATFSIISLVKSQNQQGFISLYCGLPSNESPYIEPLTNLTYISDVNFVRGGKTGNIKNNSDIDFTSRPYKVLRYFPEGIRNCYSLSVKQGTKYLIRTLFFYGNYDGLNTSPRFDLFLGPNIWTSVDVQKVDGGDGVIEEIIHVTRCNILDICLVKTGTTTPMISAIELRPLRYDTYTARTGSLKKILHFYFTNSGKEVRYPEDVYDRVWIPHSQPEWTQINTTRNVSGFSDGYNPPQDVIKTASIPTNVSEPLTFTWMSESSDDETYAYLYFAEIQQLKANETRQFKILVNGVYYIDYIPRKFEAETLITPAALKCGGGVCRVQLSKTPKSTLPPQMNAIEIFSVIQFPQSDTNTDEVIAIKNIQSTYKVSRISWQGDPCVPIQFSWMGVSCNVIDISTPPRIISLDLSSSGLTGVITPSIQNLTMLRELDLSNNNLTGVIPPSLQNLTMLRELDLSNNNLTGEVPEFLATIKPLLVIHLRGNNLRGSVPQALQDRENNDGLKLLRGKHQPKSWLVAIVASISCVAVTIIVLVLIFIFRRRKSSTRKVIRPSLEMKNRRFKYSEVKEMTNNFEVVLGKGGFGVVYHGFLNNEQVAVKVLSQSSTQGYKEFKTEVELLLRVHHVNLVSLVGYCDKGNDLALIYEFMENGNLKEHLSGKRGGPVLNWPGRLKIAIESALGIEYLHIGCKPPMVHRDVKSTNILLGLRFEAKLADFGLSRSFLVGSQTHVSTNVAGTLGYLDPEYYQKNWLTEKSDVYSFGIVLLEIITGQPVIEQSRDKSYIVEWAKSMLANGDIESIMDRNLHQDYDTSSSWKALELAMLCINPSSTLRPNMTRVAHELNECLEIYNLTKRRSQDQNSSKSSGHTVTFISDIPSAR.

The signal sequence occupies residues 1–23 (METRSKLMLLACATFSIISLVKS). At 24 to 528 (QNQQGFISLY…KHQPKSWLVA (505 aa)) the chain is on the extracellular side. N-linked (GlcNAc...) asparagine glycosylation is found at Asn49, Asn69, Asn232, Asn236, Asn259, Asn292, Asn434, Asn447, Asn458, and Asn471. LRR repeat units lie at residues 413-436 (RIIS…QNLT), 437-460 (MLRE…QNLT), 461-483 (MLRE…LATI), and 485-507 (PLLV…LQDR). Residues 529–549 (IVASISCVAVTIIVLVLIFIF) traverse the membrane as a helical segment. Over 550–886 (RRRKSSTRKV…TFISDIPSAR (337 aa)) the chain is Cytoplasmic. The 270-residue stretch at 581–850 (NNFEVVLGKG…NMTRVAHELN (270 aa)) folds into the Protein kinase domain. ATP-binding positions include 587–595 (LGKGGFGVV) and Lys608. Tyr653 bears the Phosphotyrosine mark. Asp705 acts as the Proton acceptor in catalysis. Ser739 carries the phosphoserine modification. 2 positions are modified to phosphothreonine: Thr740 and Thr745. A Phosphotyrosine modification is found at Tyr753. Residues 863 to 886 (SQDQNSSKSSGHTVTFISDIPSAR) form a disordered region. Over residues 865–878 (DQNSSKSSGHTVTF) the composition is skewed to polar residues.

Belongs to the protein kinase superfamily. Ser/Thr protein kinase family.

The protein localises to the cell membrane. It catalyses the reaction L-seryl-[protein] + ATP = O-phospho-L-seryl-[protein] + ADP + H(+). It carries out the reaction L-threonyl-[protein] + ATP = O-phospho-L-threonyl-[protein] + ADP + H(+). In Arabidopsis thaliana (Mouse-ear cress), this protein is Putative leucine-rich repeat receptor-like serine/threonine-protein kinase At2g14440.